Here is a 301-residue protein sequence, read N- to C-terminus: Protoheme IX farnesyltransferase (301 aa).

The next 9 helical transmembrane spans lie at 16-36 (VVAL…PGIP), 41-61 (IQSG…AAAI), 93-113 (VFAG…VNLI), 114-134 (TAVL…VYLK), 141-161 (IVIG…AVTG), 172-192 (SLLV…LAIF), 217-237 (QILL…ATGM), 238-258 (SGVF…WYAW), and 273-293 (FGYS…DHWL).

This sequence belongs to the UbiA prenyltransferase family. Protoheme IX farnesyltransferase subfamily.

The protein resides in the cell inner membrane. The enzyme catalyses heme b + (2E,6E)-farnesyl diphosphate + H2O = Fe(II)-heme o + diphosphate. The protein operates within porphyrin-containing compound metabolism; heme O biosynthesis; heme O from protoheme: step 1/1. Converts heme B (protoheme IX) to heme O by substitution of the vinyl group on carbon 2 of heme B porphyrin ring with a hydroxyethyl farnesyl side group. This is Protoheme IX farnesyltransferase from Xylella fastidiosa (strain 9a5c).